The following is a 198-amino-acid chain: Pyridoxal 5'-phosphate synthase subunit PdxT (198 aa).

50-52 (GES) is a binding site for L-glutamine. Cysteine 82 functions as the Nucleophile in the catalytic mechanism. Residues arginine 114 and 143–144 (IR) contribute to the L-glutamine site. Residues histidine 179 and glutamate 181 each act as charge relay system in the active site.

This sequence belongs to the glutaminase PdxT/SNO family. As to quaternary structure, in the presence of PdxS, forms a dodecamer of heterodimers. Only shows activity in the heterodimer.

The enzyme catalyses aldehydo-D-ribose 5-phosphate + D-glyceraldehyde 3-phosphate + L-glutamine = pyridoxal 5'-phosphate + L-glutamate + phosphate + 3 H2O + H(+). It catalyses the reaction L-glutamine + H2O = L-glutamate + NH4(+). The protein operates within cofactor biosynthesis; pyridoxal 5'-phosphate biosynthesis. In terms of biological role, catalyzes the hydrolysis of glutamine to glutamate and ammonia as part of the biosynthesis of pyridoxal 5'-phosphate. The resulting ammonia molecule is channeled to the active site of PdxS. This chain is Pyridoxal 5'-phosphate synthase subunit PdxT, found in Metallosphaera sedula (strain ATCC 51363 / DSM 5348 / JCM 9185 / NBRC 15509 / TH2).